A 790-amino-acid chain; its full sequence is Lysine biosynthesis regulatory protein LYS14 (790 aa).

Disordered stretches follow at residues methionine 1–glutamate 50 and phenylalanine 72–asparagine 157. Residues serine 35–serine 47 are compositionally biased toward low complexity. 2 stretches are compositionally biased toward polar residues: residues lysine 75 to aspartate 113 and threonine 120 to valine 142. Residues cysteine 159–cysteine 186 constitute a DNA-binding region (zn(2)-C6 fungal-type). Residues lysine 195–asparagine 258 form a disordered region. Over residues alanine 222–arginine 239 the composition is skewed to basic residues.

The protein localises to the nucleus. Activates the transcription of lysine biosynthesis genes. This activation is dependent on the inducer alpha-aminoadipate semialdehyde and repressed by lysine. In Saccharomyces cerevisiae (strain ATCC 204508 / S288c) (Baker's yeast), this protein is Lysine biosynthesis regulatory protein LYS14 (LYS14).